A 173-amino-acid chain; its full sequence is Photosystem I assembly protein Ycf3 (173 aa).

TPR repeat units follow at residues 35-68, 72-105, and 120-153; these read AYVY…EENA, GETL…NPKQ, and GRTA…NPGG.

This sequence belongs to the Ycf3 family.

Its subcellular location is the cellular thylakoid membrane. In terms of biological role, essential for the assembly of the photosystem I (PSI) complex. May act as a chaperone-like factor to guide the assembly of the PSI subunits. The protein is Photosystem I assembly protein Ycf3 of Synechococcus sp. (strain CC9311).